The chain runs to 30 residues: Basic phospholipase A2 CM-I (30 aa).

It belongs to the phospholipase A2 family. Group I subfamily. Requires Ca(2+) as cofactor. As to expression, expressed by the venom gland.

Its subcellular location is the secreted. The enzyme catalyses a 1,2-diacyl-sn-glycero-3-phosphocholine + H2O = a 1-acyl-sn-glycero-3-phosphocholine + a fatty acid + H(+). Snake venom phospholipase A2 (PLA2) that shows weak anticoagulant activity. Is more catalytically active than the strong anticoagulant protein CM-IV found in this venom. Acts by inhibiting the complex composed of tissue factor (F3) and coagulation factor VIIa (F7) (TF-VIIa complex) by only enzymatic mechanism. PLA2 catalyzes the calcium-dependent hydrolysis of the 2-acyl groups in 3-sn-phosphoglycerides. In Naja nigricollis (Black-necked spitting cobra), this protein is Basic phospholipase A2 CM-I.